A 64-amino-acid chain; its full sequence is Large ribosomal subunit protein bL35 (64 aa).

Disordered stretches follow at residues 1-22 (MPKA…TGKI) and 34-64 (EHKP…LLNG). The segment covering 34–48 (EHKPSTRTRRLDGHT) has biased composition (basic and acidic residues). Residues 50-64 (VSANDTQRVNSLLNG) are compositionally biased toward polar residues.

The protein belongs to the bacterial ribosomal protein bL35 family.

This chain is Large ribosomal subunit protein bL35, found in Mycobacterium leprae (strain Br4923).